Here is a 296-residue protein sequence, read N- to C-terminus: Ribonuclease MRP protein subunit POP4 (296 aa).

Disordered regions lie at residues 29-74 (LLQQ…VDPK) and 148-173 (SASG…KRLK). A compositionally biased stretch (basic and acidic residues) spans 36 to 56 (KNEKDKKGTSDVDVSMKESHQ). Polar residues predominate over residues 57–66 (ADSLPTPSKT). A Nuclear localization signal motif is present at residues 160 to 167 (SKRSKSRM). Residues 163-173 (SKSRMSMKRLK) show a composition bias toward basic residues.

This sequence belongs to the eukaryotic/archaeal RNase P protein component 1 family. Component of nuclear RNase MRP complexes. Several subunits of RNase P are also part of the RNase MRP complex. RNase MRP consists of a catalytic RNA moiety and several protein subunits.

The protein localises to the nucleus. Functionally, component of the MRP ribonuclease complex, which cleaves pre-rRNA sequences. Required for rRNA maturation, including 5.8S rRNA processing. Seems not involved in tRNA maturation. This chain is Ribonuclease MRP protein subunit POP4, found in Arabidopsis thaliana (Mouse-ear cress).